We begin with the raw amino-acid sequence, 308 residues long: MLRSTLSNWREYLTPITHTSTFETTGQLTPEEFVKAGDYLVHMFPTWRWNGTDYNNVSYKDFLPKEKQFLITRKVPCKLRASNFVETQTTETRDVGDGWELEGQSEGERESGREDTKSNEEALASNIEDLQIVDDDESEGGGDEEQLLQNELADDDDDIVDIKPSTLRYYDLYITYSTSYRVPKMYLCGFANEGTPLSPDQMFEDIAPDYRSKTATIEPLPFFKGNQISVSIHPCKHANVMKVLMEKVRASRHRARDTEAQKNAEEDWEDLQSDIDDGLRVDQYLVVFLKFITSVTPGIEHDYTMEGW.

The interval 83 to 159 is flexible region; the sequence is NFVETQTTET…NELADDDDDI (77 aa). A disordered region spans residues 89-121; it reads TTETRDVGDGWELEGQSEGERESGREDTKSNEE. The span at 106-120 shows a compositional bias: basic and acidic residues; the sequence is EGERESGREDTKSNE. Cys-235 acts as the Glycyl thioester intermediate in catalysis. The tract at residues 239–283 is handle region; sequence NVMKVLMEKVRASRHRARDTEAQKNAEEDWEDLQSDIDDGLRVDQ.

The protein belongs to the ATG3 family. In terms of assembly, monomer. Interacts with ATG8 through an intermediate thioester bond between Cys-235 and the C-terminal Gly of ATG8. Interacts with the C-terminal region of the E1-like ATG7 enzyme. Also interacts with the ATG12-ATG5 conjugate.

The protein resides in the cytoplasm. In terms of biological role, E2 conjugating enzyme required for the cytoplasm to vacuole transport (Cvt) and autophagy. Required for selective autophagic degradation of the nucleus (nucleophagy) as well as for mitophagy which contributes to regulate mitochondrial quantity and quality by eliminating the mitochondria to a basal level to fulfill cellular energy requirements and preventing excess ROS production. Responsible for the E2-like covalent binding of phosphatidylethanolamine to the C-terminal Gly of ATG8. The ATG12-ATG5 conjugate plays a role of an E3 and promotes the transfer of ATG8 from ATG3 to phosphatidylethanolamine (PE). This step is required for the membrane association of ATG8. The formation of the ATG8-phosphatidylethanolamine conjugate is essential for autophagy and for the cytoplasm to vacuole transport (Cvt). The ATG8-PE conjugate mediates tethering between adjacent membranes and stimulates membrane hemifusion, leading to expansion of the autophagosomal membrane during autophagy. This chain is Autophagy-related protein 3, found in Kluyveromyces marxianus (strain DMKU3-1042 / BCC 29191 / NBRC 104275) (Yeast).